Here is a 255-residue protein sequence, read N- to C-terminus: NAD kinase (255 aa).

Catalysis depends on Asp-44, which acts as the Proton acceptor. NAD(+)-binding positions include Asp-44–Gly-45, His-49, Asn-114–Glu-115, Asp-144, Ala-152, Ser-155–Ser-160, and Gln-216.

Belongs to the NAD kinase family. The cofactor is a divalent metal cation.

The protein resides in the cytoplasm. It catalyses the reaction NAD(+) + ATP = ADP + NADP(+) + H(+). In terms of biological role, involved in the regulation of the intracellular balance of NAD and NADP, and is a key enzyme in the biosynthesis of NADP. Catalyzes specifically the phosphorylation on 2'-hydroxyl of the adenosine moiety of NAD to yield NADP. The polypeptide is NAD kinase (Rickettsia peacockii (strain Rustic)).